The chain runs to 369 residues: Probable serine/threonine-protein kinase DDB_G0291350 (369 aa).

The region spanning 22-367 (YTVNRILGEG…QVIERINQII (346 aa)) is the Protein kinase domain. ATP is bound by residues 28–36 (LGEGGFSFV) and Lys-51. Asp-159 acts as the Proton acceptor in catalysis. Residues 169-225 (NLRRPSNNNNNNNNNNNNNNNNNNNNNNNNNNNNNNNNNNNNNNNNNNNNNNNSEDS) form a disordered region. The segment covering 175–221 (NNNNNNNNNNNNNNNNNNNNNNNNNNNNNNNNNNNNNNNNNNNNNNN) has biased composition (low complexity).

The protein belongs to the protein kinase superfamily. Ser/Thr protein kinase family.

The enzyme catalyses L-seryl-[protein] + ATP = O-phospho-L-seryl-[protein] + ADP + H(+). It carries out the reaction L-threonyl-[protein] + ATP = O-phospho-L-threonyl-[protein] + ADP + H(+). The sequence is that of Probable serine/threonine-protein kinase DDB_G0291350 from Dictyostelium discoideum (Social amoeba).